The primary structure comprises 673 residues: MPPTNKANSKKGLTLPGYNYLGPFNSLFAGAPVNKADAAARKHDFGYSDLLKEGKNPYLYFNTHDQNLIDELKDDTSFGGKLARGVFQIKKALAPALPGTSKGGDKALKRKLYFARSNKGAKKANREPAPSTSNQQNMEVSNDIPNDEAGNQPIELATRSVGGSGSVGGGGRGGSGVGYSTGGWTGGTIFSENIVVTKNTRQFICDIKNGHLYKSEVLNTGDTAHRQYAITTPWSYFNFNQYSSHFSPNDWQHLVNDYERFRPKAMIVRVYNLQIKQIMTDGAMGTVYNNDLTAGMHIFCDGDHRYPYVQHPWDDQCMPELPNSIWELPQYAYIPAPISVVDNNTTNTVEEHLLKGVPLYMLENSDHEVLRTGESTEFTFNFGDCEWIENNITFSMPQMMYNPLVRSRRIYSYSGPNNQTSNAFQNAALRTSNWMSGPGIARGTHNATLQTQSAGALVTMVTNGADVSGVGAVRVGYSTDPIYGGQQPDSDLLRLRYSASAAEGQQNPILENAARHTFTREARTKLITGSNGADGNYKEWWMLPNQMWDSAPISRYNPIWVKVPRVNRKTLLDTQDGSIPMSHPPGTIFIKLARIPVPGNGDSFLNIYVTGQVSCEVVWEVEKRGTKNWRPEYMHSATNMSVDAYTINNAGVYAGAVQNADVMQTRFNHHKVL.

Residues L13–L68 form a phospholipase A2-like region. The disordered stretch occupies residues N118–N151. The span at P130 to I144 shows a compositional bias: polar residues. Positions K623–M634 match the Nuclear localization signal motif.

Belongs to the parvoviridae capsid protein family. As to quaternary structure, heteromultimer of isoform Minor capsid protein VP1, isoform Minor capsid protein VP2 and isoform Major capsid protein VP3. In terms of assembly, homomultimer. 10 fold more abundant than the minor capsid proteins VP1 and VP2. Heteromultimer of isoform Minor capsid protein VP1, isoform Minor capsid protein VP2 and isoform Major capsid protein VP3.

Its subcellular location is the virion. The protein localises to the host nucleus. The protein resides in the host cytoplasm. The enzyme catalyses a 1,2-diacyl-sn-glycero-3-phosphocholine + H2O = a 1-acyl-sn-glycero-3-phosphocholine + a fatty acid + H(+). In terms of biological role, capsid proteins self-assembles to form an icosahedral capsid with a T=1 symmetry, about 26 nm in diameter, and consisting of 60 copies of three size variants of the capsid proteins, VP1, and VP3, which differ by the presence of an N-terminal extension in the minor protein VP1. The capsid has a channel at the 5-fold axis and there are densities extending the 5-fold axis into the interior of the capsid. The capsid encapsulates the genomic ssDNA. Binding to the host receptors also induces capsid rearrangements leading to surface exposure of VP1 N-terminus, specifically its phospholipase A2-like region. The additional N-terminal region of isoform Minor capsid protein VP1, called VP1u, may serve as a lipolytic enzyme to breach the endosomal membrane during entry into host cell and might contribute to virus transport to the nucleus. The polypeptide is Minor capsid protein VP1 (Bovine parvovirus 1 (BPV-1)).